We begin with the raw amino-acid sequence, 366 residues long: tRNA/tmRNA (uracil-C(5))-methyltransferase (366 aa).

The S-adenosyl-L-methionine site is built by glutamine 188, tyrosine 216, asparagine 221, glutamate 237, and aspartate 297. Residue cysteine 322 is the Nucleophile of the active site. Glutamate 356 acts as the Proton acceptor in catalysis.

This sequence belongs to the class I-like SAM-binding methyltransferase superfamily. RNA M5U methyltransferase family. TrmA subfamily.

The catalysed reaction is uridine(54) in tRNA + S-adenosyl-L-methionine = 5-methyluridine(54) in tRNA + S-adenosyl-L-homocysteine + H(+). The enzyme catalyses uridine(341) in tmRNA + S-adenosyl-L-methionine = 5-methyluridine(341) in tmRNA + S-adenosyl-L-homocysteine + H(+). Dual-specificity methyltransferase that catalyzes the formation of 5-methyluridine at position 54 (m5U54) in all tRNAs, and that of position 341 (m5U341) in tmRNA (transfer-mRNA). This chain is tRNA/tmRNA (uracil-C(5))-methyltransferase, found in Histophilus somni (strain 129Pt) (Haemophilus somnus).